The sequence spans 439 residues: Dihydroorotase (439 aa).

Positions 73 and 75 each coordinate Zn(2+). Substrate-binding positions include 75 to 77 (HLR) and Asn-107. Zn(2+) contacts are provided by Asp-165, His-192, and His-245. Asn-291 serves as a coordination point for substrate. A Zn(2+)-binding site is contributed by Asp-318. The active site involves Asp-318. His-322 contacts substrate.

The protein belongs to the metallo-dependent hydrolases superfamily. DHOase family. Class I DHOase subfamily. Zn(2+) serves as cofactor.

The enzyme catalyses (S)-dihydroorotate + H2O = N-carbamoyl-L-aspartate + H(+). It functions in the pathway pyrimidine metabolism; UMP biosynthesis via de novo pathway; (S)-dihydroorotate from bicarbonate: step 3/3. Catalyzes the reversible cyclization of carbamoyl aspartate to dihydroorotate. The protein is Dihydroorotase of Syntrophobacter fumaroxidans (strain DSM 10017 / MPOB).